The sequence spans 188 residues: uncharacterized protein (188 aa).

Residues 1–15 show a composition bias toward basic and acidic residues; it reads MVSSKDKIKEELKQE. The disordered stretch occupies residues 1–21; the sequence is MVSSKDKIKEELKQEEPEENV.

This is an uncharacterized protein from Saccharolobus islandicus (Sulfolobus islandicus).